Consider the following 490-residue polypeptide: AP-5 complex subunit mu-1 (490 aa).

Residues K206–N476 enclose the MHD domain.

It belongs to the adaptor complexes medium subunit family. In terms of assembly, probably part of the adaptor protein complex 5 (AP-5) a tetramer composed of AP5B1, AP5M1, AP5S1 and AP5Z1. In terms of tissue distribution, widely expressed, including in small intestine and testis. In small intestine, highly expressed in cytoplasm of villi epithelial cells and internal glands. In testis, selectively expressed in maturing sperm cells (at protein level).

The protein resides in the cytoplasm. It is found in the cytosol. It localises to the late endosome membrane. The protein localises to the lysosome membrane. As part of AP-5, a probable fifth adaptor protein complex it may be involved in endosomal transport. This is AP-5 complex subunit mu-1 (Ap5m1) from Mus musculus (Mouse).